The following is a 336-amino-acid chain: Protein SphX (336 aa).

A signal peptide spans 1 to 27 (MFDLSRLSRGIVPMALLLLGISACTPS).

Belongs to the PstS family.

Functionally, may be involved in the system for phosphate transport across the cytoplasmic membrane. This chain is Protein SphX (sphX), found in Synechocystis sp. (strain ATCC 27184 / PCC 6803 / Kazusa).